The sequence spans 146 residues: MPRLRTSRTKRPPDGFDEIEPTLIEFQDRMRQIENTMGKGTKTEMLAPIFQLHHQRSRYIYDLYYKREAISTELYNWLLKQNYADGNLIAKWKKPGYEKLCCLRCIQTAESKFGSTCICRVPKSKLDKDQRVRCTHCGCNGCASCD.

Belongs to the BUD31 (G10) family. Belongs to the 40S cdc5-associated complex (or cwf complex), a spliceosome sub-complex reminiscent of a late-stage spliceosome composed of the U2, U5 and U6 snRNAs and at least brr2, cdc5, cwf2/prp3, cwf3/syf1, cwf4/syf3, cwf5/ecm2, spp42/cwf6, cwf7/spf27, cwf8, cwf9, cwf10, cwf11, cwf12, prp45/cwf13, cwf14, cwf15, cwf16, cwf17, cwf18, cwf19, cwf20, cwf21, cwf22, cwf23, cwf24, cwf25, cwf26, cyp7/cwf27, cwf28, cwf29/ist3, lea1, msl1, prp5/cwf1, prp10, prp12/sap130, prp17, prp22, sap61, sap62, sap114, sap145, slu7, smb1, smd1, smd3, smf1, smg1 and syf2.

Its subcellular location is the nucleus. Involved in mRNA splicing where it associates with cdc5 and the other cwf proteins as part of the spliceosome. The chain is Pre-mRNA-splicing factor cwf14 (cwf14) from Schizosaccharomyces pombe (strain 972 / ATCC 24843) (Fission yeast).